Consider the following 29-residue polypeptide: Chassatide C1 (29 aa).

Residues 1-29 (GDACGETCFTGICFTAGCSCNPWPTCTRN) constitute a cross-link (cyclopeptide (Gly-Asn)). Intrachain disulfides connect Cys-4/Cys-18, Cys-8/Cys-20, and Cys-13/Cys-26.

Post-translationally, this is a cyclic peptide. In terms of tissue distribution, expressed in leaf, fruit, pedical and stem but not in root (at protein level).

Functionally, probably participates in a plant defense mechanism. In Chassalia chartacea (Chassalia curviflora), this protein is Chassatide C1.